We begin with the raw amino-acid sequence, 359 residues long: DNA polymerase IV (359 aa).

The UmuC domain maps to 4–184 (IVHVDMDAFY…LPVNRIPGVG (181 aa)). Residues aspartate 8 and aspartate 102 each contribute to the Mg(2+) site. The active site involves glutamate 103.

Belongs to the DNA polymerase type-Y family. As to quaternary structure, monomer. Requires Mg(2+) as cofactor.

The protein resides in the cytoplasm. The enzyme catalyses DNA(n) + a 2'-deoxyribonucleoside 5'-triphosphate = DNA(n+1) + diphosphate. Functionally, poorly processive, error-prone DNA polymerase involved in untargeted mutagenesis. Copies undamaged DNA at stalled replication forks, which arise in vivo from mismatched or misaligned primer ends. These misaligned primers can be extended by PolIV. Exhibits no 3'-5' exonuclease (proofreading) activity. May be involved in translesional synthesis, in conjunction with the beta clamp from PolIII. This chain is DNA polymerase IV, found in Xanthomonas campestris pv. campestris (strain 8004).